Here is a 357-residue protein sequence, read N- to C-terminus: Protein AAR2 homolog (357 aa).

The protein belongs to the AAR2 family.

This chain is Protein AAR2 homolog, found in Caenorhabditis elegans.